Reading from the N-terminus, the 259-residue chain is Triosephosphate isomerase (259 aa).

10–12 (NWK) contributes to the substrate binding site. H100 serves as the catalytic Electrophile. The Proton acceptor role is filled by E172. Residues G178, S218, and 239–240 (GG) contribute to the substrate site.

Belongs to the triosephosphate isomerase family. As to quaternary structure, homodimer.

The protein resides in the cytoplasm. The enzyme catalyses D-glyceraldehyde 3-phosphate = dihydroxyacetone phosphate. It participates in carbohydrate biosynthesis; gluconeogenesis. It functions in the pathway carbohydrate degradation; glycolysis; D-glyceraldehyde 3-phosphate from glycerone phosphate: step 1/1. Its function is as follows. Involved in the gluconeogenesis. Catalyzes stereospecifically the conversion of dihydroxyacetone phosphate (DHAP) to D-glyceraldehyde-3-phosphate (G3P). The chain is Triosephosphate isomerase from Corynebacterium glutamicum (strain ATCC 13032 / DSM 20300 / JCM 1318 / BCRC 11384 / CCUG 27702 / LMG 3730 / NBRC 12168 / NCIMB 10025 / NRRL B-2784 / 534).